Consider the following 180-residue polypeptide: ATP-dependent protease subunit HslV (180 aa).

T5 is a catalytic residue. G161, C164, and T167 together coordinate Na(+).

The protein belongs to the peptidase T1B family. HslV subfamily. A double ring-shaped homohexamer of HslV is capped on each side by a ring-shaped HslU homohexamer. The assembly of the HslU/HslV complex is dependent on binding of ATP.

The protein resides in the cytoplasm. It carries out the reaction ATP-dependent cleavage of peptide bonds with broad specificity.. Allosterically activated by HslU binding. In terms of biological role, protease subunit of a proteasome-like degradation complex believed to be a general protein degrading machinery. This chain is ATP-dependent protease subunit HslV, found in Campylobacter jejuni subsp. jejuni serotype O:6 (strain 81116 / NCTC 11828).